The chain runs to 209 residues: Nucleoside triphosphate pyrophosphatase (209 aa).

Asp79 serves as the catalytic Proton acceptor.

The protein belongs to the Maf family. The cofactor is a divalent metal cation.

The protein localises to the cytoplasm. The catalysed reaction is a ribonucleoside 5'-triphosphate + H2O = a ribonucleoside 5'-phosphate + diphosphate + H(+). The enzyme catalyses a 2'-deoxyribonucleoside 5'-triphosphate + H2O = a 2'-deoxyribonucleoside 5'-phosphate + diphosphate + H(+). Nucleoside triphosphate pyrophosphatase. May have a dual role in cell division arrest and in preventing the incorporation of modified nucleotides into cellular nucleic acids. This chain is Nucleoside triphosphate pyrophosphatase, found in Mycolicibacterium vanbaalenii (strain DSM 7251 / JCM 13017 / BCRC 16820 / KCTC 9966 / NRRL B-24157 / PYR-1) (Mycobacterium vanbaalenii).